The primary structure comprises 371 residues: Putative glutamate--cysteine ligase 2 (371 aa).

The protein belongs to the glutamate--cysteine ligase type 2 family. YbdK subfamily. In terms of assembly, homodimer.

The catalysed reaction is L-cysteine + L-glutamate + ATP = gamma-L-glutamyl-L-cysteine + ADP + phosphate + H(+). ATP-dependent carboxylate-amine ligase which exhibits weak glutamate--cysteine ligase activity. This is Putative glutamate--cysteine ligase 2 from Klebsiella pneumoniae (strain 342).